Consider the following 185-residue polypeptide: Dioxygenase easH (185 aa).

Fe cation is bound by residues histidine 17, aspartate 19, and histidine 93.

The protein belongs to the PhyH family. In terms of assembly, homodimer. The cofactor is Fe cation.

Its pathway is alkaloid biosynthesis; ergot alkaloid biosynthesis. Dioxygenase; part of the gene cluster that mediates the biosynthesis of fungal ergot alkaloid ergovaline, the predominant ergopeptine product in E.festucae var. lolii. DmaW catalyzes the first step of ergot alkaloid biosynthesis by condensing dimethylallyl diphosphate (DMAP) and tryptophan to form 4-dimethylallyl-L-tryptophan. The second step is catalyzed by the methyltransferase easF that methylates 4-dimethylallyl-L-tryptophan in the presence of S-adenosyl-L-methionine, resulting in the formation of 4-dimethylallyl-L-abrine. The catalase easC and the FAD-dependent oxidoreductase easE then transform 4-dimethylallyl-L-abrine to chanoclavine-I which is further oxidized by easD in the presence of NAD(+), resulting in the formation of chanoclavine-I aldehyde. Agroclavine dehydrogenase easG then mediates the conversion of chanoclavine-I aldehyde to agroclavine via a non-enzymatic adduct reaction: the substrate is an iminium intermediate that is formed spontaneously from chanoclavine-I aldehyde in the presence of glutathione. The presence of easA is not required to complete this reaction. Further conversion of agroclavine to paspalic acid is a two-step process involving oxidation of agroclavine to elymoclavine and of elymoclavine to paspalic acid, the second step being performed by the elymoclavine oxidase cloA. Paspalic acid is then further converted to D-lysergic acid. Ergovaline is assembled from D-lysergic acid and three different amino acids by the D-lysergyl-peptide-synthetase composed of a monomudular (lpsB) and a trimodular (lpsA) nonribosomal peptide synthetase subunit. In Epichloe festucae var. lolii (Neotyphodium lolii), this protein is Dioxygenase easH.